The following is a 489-amino-acid chain: Rhamnulokinase (489 aa).

13–17 (ASSGR) contributes to the ATP binding site. A disulfide bond links C68 and C222. Substrate is bound by residues G83 and 236-238 (HDT). The active-site Proton acceptor is D237. Residue T259 participates in ATP binding. Position 296 (N296) interacts with substrate. Q304 contributes to the ATP binding site. C353 and C370 form a disulfide bridge. G402 serves as a coordination point for ATP. C413 and C417 are oxidised to a cystine.

It belongs to the rhamnulokinase family. It depends on Mg(2+) as a cofactor.

The catalysed reaction is L-rhamnulose + ATP = L-rhamnulose 1-phosphate + ADP + H(+). Its pathway is carbohydrate degradation; L-rhamnose degradation; glycerone phosphate from L-rhamnose: step 2/3. Involved in the catabolism of L-rhamnose (6-deoxy-L-mannose). Catalyzes the transfer of the gamma-phosphate group from ATP to the 1-hydroxyl group of L-rhamnulose to yield L-rhamnulose 1-phosphate. In Salmonella schwarzengrund (strain CVM19633), this protein is Rhamnulokinase.